The following is a 328-amino-acid chain: 3-dehydroquinate synthase (328 aa).

Belongs to the archaeal-type DHQ synthase family.

The catalysed reaction is 2-amino-2,3,7-trideoxy-D-lyxo-hept-6-ulosonate + NAD(+) + H2O = 3-dehydroquinate + NH4(+) + NADH + H(+). Catalyzes the oxidative deamination and cyclization of 2-amino-3,7-dideoxy-D-threo-hept-6-ulosonic acid (ADH) to yield 3-dehydroquinate (DHQ), which is fed into the canonical shikimic pathway of aromatic amino acid biosynthesis. The protein is 3-dehydroquinate synthase of Methanosphaerula palustris (strain ATCC BAA-1556 / DSM 19958 / E1-9c).